The chain runs to 232 residues: Large ribosomal subunit protein uL1 (232 aa).

Belongs to the universal ribosomal protein uL1 family. As to quaternary structure, part of the 50S ribosomal subunit.

In terms of biological role, binds directly to 23S rRNA. The L1 stalk is quite mobile in the ribosome, and is involved in E site tRNA release. Functionally, protein L1 is also a translational repressor protein, it controls the translation of the L11 operon by binding to its mRNA. This Variovorax paradoxus (strain S110) protein is Large ribosomal subunit protein uL1.